Reading from the N-terminus, the 544-residue chain is Sialidase (544 aa).

Positions 1-22 (MKKAVILFSLFCFLCAIPVVQA) are cleaved as a signal peptide. BNR repeat units lie at residues 239–250 (SRSTDGGKTWEK), 318–329 (AKSTDDGKTWSA), and 378–389 (MYSKDGGKNWKM). The active site involves Glu-399. Position 415 (Arg-415) interacts with substrate. The BNR 4 repeat unit spans residues 425-436 (AITKDLGKTWTE). Arg-479 serves as a coordination point for substrate. One copy of the BNR 5 repeat lies at 485–496 (KISLDGGVTWSP).

This sequence belongs to the glycosyl hydrolase 33 family.

The protein localises to the periplasm. The enzyme catalyses Hydrolysis of alpha-(2-&gt;3)-, alpha-(2-&gt;6)-, alpha-(2-&gt;8)- glycosidic linkages of terminal sialic acid residues in oligosaccharides, glycoproteins, glycolipids, colominic acid and synthetic substrates.. In terms of biological role, sialidases have been suggested to be pathogenic factors in microbial infections. This is Sialidase (nanH) from Bacteroides fragilis (strain YCH46).